The primary structure comprises 375 residues: Alcohol dehydrogenase class-3 chain L (375 aa).

N-acetylalanine is present on Ala1. 7 residues coordinate Zn(2+): Cys46, His68, Cys98, Cys101, Cys104, Cys112, and Cys175.

It belongs to the zinc-containing alcohol dehydrogenase family. Class-III subfamily. Homodimer or heterodimer with H chain. Zn(2+) is required as a cofactor.

The protein localises to the cytoplasm. The catalysed reaction is a primary alcohol + NAD(+) = an aldehyde + NADH + H(+). It catalyses the reaction a secondary alcohol + NAD(+) = a ketone + NADH + H(+). The enzyme catalyses S-(hydroxymethyl)glutathione + NADP(+) = S-formylglutathione + NADPH + H(+). It carries out the reaction S-(hydroxymethyl)glutathione + NAD(+) = S-formylglutathione + NADH + H(+). In terms of biological role, class-III ADH is remarkably ineffective in oxidizing ethanol, but it readily catalyzes the oxidation of long-chain primary alcohols and the oxidation of S-(hydroxymethyl) glutathione. This is Alcohol dehydrogenase class-3 chain L from Gadus morhua (Atlantic cod).